The sequence spans 407 residues: Tryptophan synthase beta chain (407 aa).

The span at 1–11 (MSTAPSQQHAS) shows a compositional bias: polar residues. The tract at residues 1-25 (MSTAPSQQHASAQVPDPRGRFGDFG) is disordered. Lys100 carries the post-translational modification N6-(pyridoxal phosphate)lysine.

The protein belongs to the TrpB family. As to quaternary structure, tetramer of two alpha and two beta chains. The cofactor is pyridoxal 5'-phosphate.

It carries out the reaction (1S,2R)-1-C-(indol-3-yl)glycerol 3-phosphate + L-serine = D-glyceraldehyde 3-phosphate + L-tryptophan + H2O. Its pathway is amino-acid biosynthesis; L-tryptophan biosynthesis; L-tryptophan from chorismate: step 5/5. Its function is as follows. The beta subunit is responsible for the synthesis of L-tryptophan from indole and L-serine. The chain is Tryptophan synthase beta chain from Rhodopirellula baltica (strain DSM 10527 / NCIMB 13988 / SH1).